The primary structure comprises 344 residues: MGAALALLGDLVATVSEAAAATGFSVAEIAAGEAAATIEVEIASLATVEGITSTSEAIAAIGLTPETYAVITGAPGAVAGFAALVQTVTGGSAIAQLGYRFFADWDHKVSTVGLFQQPAMALQLFNPEDYYDILFPGVNAFVNNIHYLDPRHWGPSLFSTISQAFWNLVRDDLPALTSQEIQRRTQKLFVESLARFLEETTWAIVNSPANLYNYISDYYSRLSPVRPSMVRQVAQREGTYISFGHSYTQSIDDADSIQEVTQRLDLKTPNVQSGEFIERSIAPGGANQRSAPQWMLPLLLGLYGTVTPALEAYEDGPNKKKRRKEGPRASSKTSYKRRSRSSRS.

Gly2 carries the N-myristoyl glycine; by host lipid modification. The D1 stretch occupies residues 273–308; the sequence is SGEFIERSIAPGGANQRSAPQWMLPLLLGLYGTVTP. The chain crosses the membrane as a helical span at residues 290–310; it reads SAPQWMLPLLLGLYGTVTPAL. Positions 312-344 are disordered; it reads AYEDGPNKKKRRKEGPRASSKTSYKRRSRSSRS. Residues 313 to 344 are DNA-binding; it reads YEDGPNKKKRRKEGPRASSKTSYKRRSRSSRS. The Nuclear localization signal signature appears at 316–324; it reads GPNKKKRRK. Residues 334 to 344 show a composition bias toward basic residues; that stretch reads SYKRRSRSSRS.

The protein belongs to the polyomaviruses capsid protein VP2 family. Forms homooligomers, and heterooligomers with VP3 in the endoplasmic reticulum membrane. Interacts (via D1 domain) with VP1. As to quaternary structure, forms homooligomers, and heterooligomers with VP2 in the endoplasmic reticulum membrane. Interacts (via D1 domain) with VP1.

The protein localises to the virion. It is found in the host nucleus. Its subcellular location is the host endoplasmic reticulum. It localises to the host endoplasmic reticulum membrane. Functionally, structural protein that resides within the core of the capsid surrounded by 72 VP1 pentamers. Participates in host cell receptor binding together with VP1. Following virus endocytosis and trafficking to the endoplasmic reticulum, VP2 and VP3 form oligomers and integrate into the endoplasmic reticulum membrane. Heterooligomer VP2-VP3 may create a viroporin for transporting the viral genome across the endoplasmic reticulum membrane to the cytoplasm. Nuclear entry of the viral DNA involves the selective exposure and importin recognition of VP2 or VP3 nuclear localization signal (shared C-terminus). Plays a role in virion assembly within the nucleus in particular through a DNA-binding domain located in the C-terminal region. An N-terminal myristoylation suggests a scaffold function for virion assembly. Structural protein that resides within the core of the capsid surrounded by 72 VP1 pentamers. Following virus endocytosis and trafficking to the endoplasmic reticulum, VP2 and VP3 form oligomers and integrate into the endoplasmic reticulum membrane. Heterooligomer VP2-VP3 may create a viroporin for transporting the viral genome across the endoplasmic reticulum membrane to the cytoplasm. Nuclear entry of the viral DNA involves the selective exposure and importin recognition of VP2 or VP3 nuclear localization signal (shared C-terminus). Plays a role in virion assembly within the nucleus. May participate in host cell lysis when associated with VP4. Its function is as follows. Viroporin inducing perforation of cellular membranes to trigger virus progeny release. Forms pores of 3 nm inner diameter. VP4 is expressed about 24 hours after the late structural proteins and is not incorporated into the mature virion. This chain is Minor capsid protein VP2, found in Homo sapiens (Human).